We begin with the raw amino-acid sequence, 1088 residues long: Calcium-transporting ATPase 5, plasma membrane-type (1088 aa).

Residues Met1 to Ser11 are compositionally biased toward low complexity. The disordered stretch occupies residues Met1–Ala32. The Cytoplasmic segment spans residues Met1–Thr198. Residues Leu199–Ile219 form a helical membrane-spanning segment. Topologically, residues Lys220 to Glu221 are extracellular. A helical transmembrane segment spans residues Gly222 to Thr242. At Ser243–Tyr338 the chain is on the cytoplasmic side. The helical transmembrane segment at Gly339–Ile359 threads the bilayer. Over Ser360–Gly375 the chain is Extracellular. Residues Val376–Leu396 form a helical membrane-spanning segment. The Cytoplasmic segment spans residues Ala397–Arg425. The chain crosses the membrane as a helical span at residues Gly426 to Leu446. Residues Pro447–Lys851 lie on the Extracellular side of the membrane. The active-site 4-aspartylphosphate intermediate is the Asp486. Residues Asn532, Asn569, and Asn737 are each glycosylated (N-linked (GlcNAc...) asparagine). Asp794 and Asp798 together coordinate Mg(2+). The chain crosses the membrane as a helical span at residues Phe852 to Val872. Residues Ser873–Asn880 lie on the Cytoplasmic side of the membrane. Residues Ala881–Thr901 traverse the membrane as a helical segment. Residues Glu902–Pro919 lie on the Extracellular side of the membrane. A helical membrane pass occupies residues Leu920–Leu940. The Cytoplasmic segment spans residues Leu941–His1000. A helical transmembrane segment spans residues Leu1001–Gly1021. The Extracellular segment spans residues Lys1022–Thr1030. A helical transmembrane segment spans residues Trp1031–Gly1051. Topologically, residues Lys1052–Val1088 are cytoplasmic.

This sequence belongs to the cation transport ATPase (P-type) (TC 3.A.3) family. Type IIB subfamily. As to quaternary structure, interacts with NOH1.

It localises to the cell membrane. It carries out the reaction Ca(2+)(in) + ATP + H2O = Ca(2+)(out) + ADP + phosphate + H(+). Activated by calmodulin. Functionally, this magnesium-dependent enzyme catalyzes the hydrolysis of ATP coupled with the translocation of calcium from the cytosol out of the cell, into the endoplasmic reticulum, or into organelles. Involved in salt and drought stress tolerance. Involved in cold stress tolerance. This chain is Calcium-transporting ATPase 5, plasma membrane-type, found in Oryza sativa subsp. japonica (Rice).